The sequence spans 388 residues: Queuine tRNA-ribosyltransferase (388 aa).

Catalysis depends on Asp-90, which acts as the Proton acceptor. Substrate-binding positions include 90–94, Asp-144, Gln-205, and Gly-232; that span reads DSGGF. The tract at residues 263 to 269 is RNA binding; that stretch reads GVGTPED. Asp-282 (nucleophile) is an active-site residue. The RNA binding; important for wobble base 34 recognition stretch occupies residues 287 to 291; that stretch reads TRNAR. Zn(2+)-binding residues include Cys-320, Cys-322, Cys-325, and His-351.

The protein belongs to the queuine tRNA-ribosyltransferase family. Homodimer. Within each dimer, one monomer is responsible for RNA recognition and catalysis, while the other monomer binds to the replacement base PreQ1. Requires Zn(2+) as cofactor.

It carries out the reaction 7-aminomethyl-7-carbaguanine + guanosine(34) in tRNA = 7-aminomethyl-7-carbaguanosine(34) in tRNA + guanine. It functions in the pathway tRNA modification; tRNA-queuosine biosynthesis. In terms of biological role, catalyzes the base-exchange of a guanine (G) residue with the queuine precursor 7-aminomethyl-7-deazaguanine (PreQ1) at position 34 (anticodon wobble position) in tRNAs with GU(N) anticodons (tRNA-Asp, -Asn, -His and -Tyr). Catalysis occurs through a double-displacement mechanism. The nucleophile active site attacks the C1' of nucleotide 34 to detach the guanine base from the RNA, forming a covalent enzyme-RNA intermediate. The proton acceptor active site deprotonates the incoming PreQ1, allowing a nucleophilic attack on the C1' of the ribose to form the product. After dissociation, two additional enzymatic reactions on the tRNA convert PreQ1 to queuine (Q), resulting in the hypermodified nucleoside queuosine (7-(((4,5-cis-dihydroxy-2-cyclopenten-1-yl)amino)methyl)-7-deazaguanosine). The polypeptide is Queuine tRNA-ribosyltransferase (Campylobacter curvus (strain 525.92)).